The primary structure comprises 502 residues: Cardiolipin synthase (502 aa).

The next 3 helical transmembrane spans lie at 7–27, 29–49, and 59–79; these read VIIF…YWEG, LLGG…FVIS, and ITWL…YLMF. PLD phosphodiesterase domains lie at 237 to 264 and 415 to 442; these read INFR…GDEY and SKGF…DMRS. Active-site residues include His242, Lys244, Asp249, His420, Lys422, and Asp427.

This sequence belongs to the phospholipase D family. Cardiolipin synthase subfamily.

It is found in the cell membrane. It catalyses the reaction 2 a 1,2-diacyl-sn-glycero-3-phospho-(1'-sn-glycerol) = a cardiolipin + glycerol. Its function is as follows. Catalyzes the reversible phosphatidyl group transfer from one phosphatidylglycerol molecule to another to form cardiolipin (CL) (diphosphatidylglycerol) and glycerol. The sequence is that of Cardiolipin synthase (cls) from Geobacillus sp. (strain WCH70).